Here is a 258-residue protein sequence, read N- to C-terminus: UPF0246 protein CGSHiGG_08495 (258 aa).

The protein belongs to the UPF0246 family.

In Haemophilus influenzae (strain PittGG), this protein is UPF0246 protein CGSHiGG_08495.